The sequence spans 338 residues: MKVFYDKDADLSLIKGKKVTIIGYGSQGHAHALNLKDSGVNVTVGLRKDGASWSKAANAGLTVKEVDEAVKDADVVMMLLPDEQIADVYNKEVHGNIKQGAALAFAHGFNVHYGQVQSRADLDVIMIAPKAPGHKVRGTYAQGGGVPHLIAVYQDKSGSARDVALSYATANGGGRAGIIETNFREETETDLFGEQAVLCGGAVELIKAGFETLVEAGYAPEMAYFECLHELKLIVDLIYEGGIANMNYSISNNAEYGEYVTGPRVVTEDTKNAMRQCLKDIQTGEYAKSFILENKAGAPTLISRRRLNAEHDIEVVGAKLRAMMPWIAKNKLVDETKN.

The KARI N-terminal Rossmann domain occupies 1–181; that stretch reads MKVFYDKDAD…GGGRAGIIET (181 aa). NADP(+) is bound by residues 24–27, arginine 47, and serine 52; that span reads YGSQ. The active site involves histidine 107. Glycine 133 contacts NADP(+). One can recognise a KARI C-terminal knotted domain in the interval 182–327; it reads NFREETETDL…AKLRAMMPWI (146 aa). Positions 190, 194, 226, and 230 each coordinate Mg(2+). Position 251 (serine 251) interacts with substrate.

Belongs to the ketol-acid reductoisomerase family. The cofactor is Mg(2+).

The catalysed reaction is (2R)-2,3-dihydroxy-3-methylbutanoate + NADP(+) = (2S)-2-acetolactate + NADPH + H(+). The enzyme catalyses (2R,3R)-2,3-dihydroxy-3-methylpentanoate + NADP(+) = (S)-2-ethyl-2-hydroxy-3-oxobutanoate + NADPH + H(+). Its pathway is amino-acid biosynthesis; L-isoleucine biosynthesis; L-isoleucine from 2-oxobutanoate: step 2/4. It participates in amino-acid biosynthesis; L-valine biosynthesis; L-valine from pyruvate: step 2/4. Involved in the biosynthesis of branched-chain amino acids (BCAA). Catalyzes an alkyl-migration followed by a ketol-acid reduction of (S)-2-acetolactate (S2AL) to yield (R)-2,3-dihydroxy-isovalerate. In the isomerase reaction, S2AL is rearranged via a Mg-dependent methyl migration to produce 3-hydroxy-3-methyl-2-ketobutyrate (HMKB). In the reductase reaction, this 2-ketoacid undergoes a metal-dependent reduction by NADPH to yield (R)-2,3-dihydroxy-isovalerate. The protein is Ketol-acid reductoisomerase (NADP(+)) of Polynucleobacter necessarius subsp. necessarius (strain STIR1).